The following is a 279-amino-acid chain: B3 domain-containing protein Os11g0156000 (279 aa).

Residues 38 to 144 (FEKPLTPSDV…DRLFIGCRRR (107 aa)) constitute a DNA-binding region (TF-B3). Disordered regions lie at residues 148 to 182 (AAAQ…YSTS) and 203 to 228 (HDHG…AGSA). Over residues 159-168 (VRVAPAAQNA) the composition is skewed to low complexity. Positions 203-219 (HDHGDMHHADESPRDTD) are enriched in basic and acidic residues.

Its subcellular location is the nucleus. This is B3 domain-containing protein Os11g0156000 from Oryza sativa subsp. japonica (Rice).